Consider the following 179-residue polypeptide: Large ribosomal subunit protein bL17 (179 aa).

Residues Arg123 to Arg179 are disordered. The span at Ala154–Pro168 shows a compositional bias: low complexity. Polar residues predominate over residues Glu170 to Arg179.

This sequence belongs to the bacterial ribosomal protein bL17 family. As to quaternary structure, part of the 50S ribosomal subunit. Contacts protein L32.

This Tropheryma whipplei (strain Twist) (Whipple's bacillus) protein is Large ribosomal subunit protein bL17.